Reading from the N-terminus, the 345-residue chain is Anthranilate phosphoribosyltransferase (345 aa).

Residues Gly84, 87–88 (GD), Thr92, 94–97 (NIST), 112–120 (KHGNRSVSS), and Ser124 each bind 5-phospho-alpha-D-ribose 1-diphosphate. Gly84 contacts anthranilate. Position 96 (Ser96) interacts with Mg(2+). Asn115 is a binding site for anthranilate. Residue Arg170 coordinates anthranilate. Residues Asp229 and Glu230 each contribute to the Mg(2+) site.

Belongs to the anthranilate phosphoribosyltransferase family. Homodimer. Requires Mg(2+) as cofactor.

The catalysed reaction is N-(5-phospho-beta-D-ribosyl)anthranilate + diphosphate = 5-phospho-alpha-D-ribose 1-diphosphate + anthranilate. It participates in amino-acid biosynthesis; L-tryptophan biosynthesis; L-tryptophan from chorismate: step 2/5. Functionally, catalyzes the transfer of the phosphoribosyl group of 5-phosphorylribose-1-pyrophosphate (PRPP) to anthranilate to yield N-(5'-phosphoribosyl)-anthranilate (PRA). The polypeptide is Anthranilate phosphoribosyltransferase (Xanthomonas campestris pv. campestris (strain B100)).